A 371-amino-acid polypeptide reads, in one-letter code: Cytochrome b (371 aa).

The next 4 helical transmembrane spans lie at 25 to 45 (FGSM…FLAI), 69 to 90 (WIMQ…YIHI), 105 to 125 (WLTG…GYVL), and 170 to 190 (FFAL…IHII). 2 residues coordinate heme b: H75 and H89. Heme b contacts are provided by H174 and H188. Position 193 (H193) interacts with a ubiquinone. The next 4 membrane-spanning stretches (helical) occupy residues 218 to 238 (YKDL…LSFM), 280 to 300 (LGGA…PFTH), 312 to 332 (LAQT…WAAT), and 339 to 358 (FLLI…IMNP).

This sequence belongs to the cytochrome b family. The cytochrome bc1 complex contains 3 respiratory subunits (MT-CYB, CYC1 and UQCRFS1), 2 core proteins (UQCRC1 and UQCRC2) and probably 6 low-molecular weight proteins. Heme b serves as cofactor.

The protein localises to the mitochondrion inner membrane. Its function is as follows. Component of the ubiquinol-cytochrome c reductase complex (complex III or cytochrome b-c1 complex) that is part of the mitochondrial respiratory chain. The b-c1 complex mediates electron transfer from ubiquinol to cytochrome c. Contributes to the generation of a proton gradient across the mitochondrial membrane that is then used for ATP synthesis. In Laticauda colubrina (Yellow-lipped sea krait), this protein is Cytochrome b (MT-CYB).